The following is a 308-amino-acid chain: Hydroxyacylglutathione hydrolase, mitochondrial (308 aa).

Residues 1–13 (MVLGRGLLGRRSL) constitute a mitochondrion transit peptide. Positions 102, 104, 106, and 107 each coordinate Zn(2+). The residue at position 116 (Lys116) is an N6-acetyllysine. Zn(2+) is bound by residues His158 and Asp182. Substrate is bound by residues 191–193 (KFY) and 221–223 (HEY). Residue His221 coordinates Zn(2+). At Lys229 the chain carries N6-acetyllysine; alternate. Lys229 is modified (N6-succinyllysine; alternate). 297 to 300 (RKEK) serves as a coordination point for substrate.

This sequence belongs to the metallo-beta-lactamase superfamily. Glyoxalase II family. Monomer. It depends on Zn(2+) as a cofactor. As to expression, testis.

The protein resides in the mitochondrion matrix. Its subcellular location is the cytoplasm. The catalysed reaction is an S-(2-hydroxyacyl)glutathione + H2O = a 2-hydroxy carboxylate + glutathione + H(+). It carries out the reaction (R)-S-lactoylglutathione + H2O = (R)-lactate + glutathione + H(+). Its pathway is secondary metabolite metabolism; methylglyoxal degradation; (R)-lactate from methylglyoxal: step 2/2. Functionally, thiolesterase that catalyzes the hydrolysis of S-D-lactoyl-glutathione to form glutathione and D-lactic acid. The protein is Hydroxyacylglutathione hydrolase, mitochondrial (HAGH) of Macaca fascicularis (Crab-eating macaque).